The chain runs to 414 residues: Arrestin domain-containing protein 3 (414 aa).

2 short sequence motifs (PPxY motif) span residues P346–Y349 and P391–Y394. The interval L393–R414 is disordered. Positions S405–R414 are enriched in basic and acidic residues.

This sequence belongs to the arrestin family. Interacts (via PPxY motifs) with NEDD4 (via WW domains). Interacts with ADRB2. Interacts with ADRB3. Interacts with HGS (via PPxY motifs). Does not bind TXN (thioredoxin). Interacts with ITCH.

The protein localises to the cytoplasm. It is found in the cell membrane. Its subcellular location is the lysosome. The protein resides in the endosome. It localises to the early endosome. Its function is as follows. Adapter protein that plays a role in regulating cell-surface expression of adrenergic receptors and probably also other G protein-coupled receptors. Plays a role in NEDD4-mediated ubiquitination and endocytosis af activated ADRB2 and subsequent ADRB2 degradation. May recruit NEDD4 to ADRB2. Alternatively, may function as adapter protein that does not play a major role in recruiting NEDD4 to ADRB2, but rather plays a role in a targeting ADRB2 to endosomes. The polypeptide is Arrestin domain-containing protein 3 (Arrdc3) (Rattus norvegicus (Rat)).